A 364-amino-acid chain; its full sequence is MREETREQPAPLRSGLTTGSCATATSLAAARLLLSGETSDAVSITLPKGKVVQMRLEFCRLAGESAEAGTLKDAGDDPDVTHGALLYSQVRLLDEPSIRFVAGSGVGTVTRPGLVLAVGEPAINPVPRRMISEHLQRLADECGYFGGFEVTVNVQGGEQLALKTMNPRLGILGGLSILGTSGIVRPFSCAAYIASIHQGIDVAHTNGYTHIAACTGNASEDTMRRVYGLPEIALIEMGDFVGAVLKHLRKVPVPRLTLCGGFGKISKLAAGHMDLHSRHSSIDLPQLAGWAADIGADAALQAAIIGANTSQQALALAHAAGIALGDAVCAHALAFARSVVPAQVQVEVFAIDRQGGIVGRAGVQ.

This sequence belongs to the CbiD family.

It carries out the reaction Co-precorrin-5B + S-adenosyl-L-methionine = Co-precorrin-6A + S-adenosyl-L-homocysteine. The protein operates within cofactor biosynthesis; adenosylcobalamin biosynthesis; cob(II)yrinate a,c-diamide from sirohydrochlorin (anaerobic route): step 6/10. Its function is as follows. Catalyzes the methylation of C-1 in cobalt-precorrin-5B to form cobalt-precorrin-6A. The chain is Cobalt-precorrin-5B C(1)-methyltransferase from Pseudomonas putida (strain GB-1).